Reading from the N-terminus, the 396-residue chain is L-lactate dehydrogenase (396 aa).

The FMN hydroxy acid dehydrogenase domain occupies 1-380; that stretch reads MIISAASDYR…TQDSLVQGLG (380 aa). Substrate is bound at residue tyrosine 24. Positions 106 and 127 each coordinate FMN. Residue tyrosine 129 coordinates substrate. Threonine 155 provides a ligand contact to FMN. Arginine 164 provides a ligand contact to substrate. Residue lysine 251 participates in FMN binding. Histidine 275 serves as the catalytic Proton acceptor. Arginine 278 lines the substrate pocket. 306–330 contacts FMN; sequence DSGIRNGLDVVRMIALGADTVLLGR.

Belongs to the FMN-dependent alpha-hydroxy acid dehydrogenase family. It depends on FMN as a cofactor.

The protein localises to the cell inner membrane. The catalysed reaction is (S)-lactate + A = pyruvate + AH2. Its function is as follows. Catalyzes the conversion of L-lactate to pyruvate. Is coupled to the respiratory chain. The protein is L-lactate dehydrogenase of Shigella flexneri serotype 5b (strain 8401).